The sequence spans 337 residues: Glucokinase (337 aa).

11–16 (ADIGGT) contacts ATP.

The protein belongs to the bacterial glucokinase family.

Its subcellular location is the cytoplasm. It catalyses the reaction D-glucose + ATP = D-glucose 6-phosphate + ADP + H(+). In Xylella fastidiosa (strain M23), this protein is Glucokinase.